A 375-amino-acid chain; its full sequence is Serpin B5 (375 aa).

N-linked (GlcNAc...) asparagine glycosylation is found at asparagine 99, asparagine 133, asparagine 155, asparagine 188, and asparagine 361.

Belongs to the serpin family. Ov-serpin subfamily. As to quaternary structure, interacts with IRF6.

It is found in the secreted. The protein localises to the extracellular space. Its function is as follows. Tumor suppressor. It blocks the growth, invasion, and metastatic properties of mammary tumors. As it does not undergo the S (stressed) to R (relaxed) conformational transition characteristic of active serpins, it exhibits no serine protease inhibitory activity. The chain is Serpin B5 (SERPINB5) from Plecturocebus moloch (Dusky titi monkey).